A 199-amino-acid chain; its full sequence is ATP-dependent Clp protease proteolytic subunit 2 (199 aa).

The active-site Nucleophile is Ser95. The active site involves His120.

It belongs to the peptidase S14 family. As to quaternary structure, fourteen ClpP subunits assemble into 2 heptameric rings which stack back to back to give a disk-like structure with a central cavity, resembling the structure of eukaryotic proteasomes.

The protein resides in the cytoplasm. The catalysed reaction is Hydrolysis of proteins to small peptides in the presence of ATP and magnesium. alpha-casein is the usual test substrate. In the absence of ATP, only oligopeptides shorter than five residues are hydrolyzed (such as succinyl-Leu-Tyr-|-NHMec, and Leu-Tyr-Leu-|-Tyr-Trp, in which cleavage of the -Tyr-|-Leu- and -Tyr-|-Trp bonds also occurs).. Cleaves peptides in various proteins in a process that requires ATP hydrolysis. Has a chymotrypsin-like activity. Plays a major role in the degradation of misfolded proteins. The protein is ATP-dependent Clp protease proteolytic subunit 2 of Mycolicibacterium paratuberculosis (strain ATCC BAA-968 / K-10) (Mycobacterium paratuberculosis).